We begin with the raw amino-acid sequence, 189 residues long: GTP cyclohydrolase 1 (189 aa).

Zn(2+) contacts are provided by Cys78, His81, and Cys150.

It belongs to the GTP cyclohydrolase I family. In terms of assembly, homomer.

It carries out the reaction GTP + H2O = 7,8-dihydroneopterin 3'-triphosphate + formate + H(+). Its pathway is cofactor biosynthesis; 7,8-dihydroneopterin triphosphate biosynthesis; 7,8-dihydroneopterin triphosphate from GTP: step 1/1. This is GTP cyclohydrolase 1 from Bacillus anthracis (strain A0248).